The chain runs to 107 residues: Phosphoribosyl-ATP pyrophosphatase (107 aa).

Belongs to the PRA-PH family.

It localises to the cytoplasm. The catalysed reaction is 1-(5-phospho-beta-D-ribosyl)-ATP + H2O = 1-(5-phospho-beta-D-ribosyl)-5'-AMP + diphosphate + H(+). Its pathway is amino-acid biosynthesis; L-histidine biosynthesis; L-histidine from 5-phospho-alpha-D-ribose 1-diphosphate: step 2/9. This Clostridium tetani (strain Massachusetts / E88) protein is Phosphoribosyl-ATP pyrophosphatase (hisE).